Reading from the N-terminus, the 91-residue chain is Acyl-CoA-binding domain-containing protein 2 (91 aa).

The region spanning 3–88 is the ACB domain; the sequence is LQEEFEEFAE…VKQLLEEASA (86 aa). Residues lysine 15, 30 to 34, lysine 52, lysine 56, and tyrosine 75 each bind an acyl-CoA; that span reads YGLYK.

Belongs to the ACBP family. As to expression, highly expressed in leaves. Expressed at low levels in roots and seeds.

It is found in the cytoplasm. The protein resides in the cytosol. Its function is as follows. Binds medium- and long-chain acyl-CoA esters with high affinity. Can interact in vitro with linolenoyl-CoA. Binds palmitoyl-CoA and linoleoyl-CoA in vitro. Binds phosphatidic acid (PA) and phosphatidylcholine (PC) in vitro. May play a role in the biosynthesis of phospholipids. The protein is Acyl-CoA-binding domain-containing protein 2 of Oryza sativa subsp. japonica (Rice).